We begin with the raw amino-acid sequence, 233 residues long: Cell number regulator 8 (233 aa).

2 helical membrane-spanning segments follow: residues 85–101 (VCLLGTVAPCVLYGSNV) and 115–138 (CLPYTGLYLLGNSLFGWNCLAPWF).

The protein belongs to the cornifelin family. Expressed in roots, coleoptiles, leaves, stalks, apical meristems, immature ears, embryos, endosperm, pericarp, silks, tassel spikelets and pollen. Highest expression in the pericarp and stalks.

The protein resides in the membrane. This is Cell number regulator 8 (CNR8) from Zea mays (Maize).